We begin with the raw amino-acid sequence, 126 residues long: Holo-[acyl-carrier-protein] synthase (126 aa).

Mg(2+) is bound by residues aspartate 8 and glutamate 57.

This sequence belongs to the P-Pant transferase superfamily. AcpS family. Mg(2+) is required as a cofactor.

It is found in the cytoplasm. It carries out the reaction apo-[ACP] + CoA = holo-[ACP] + adenosine 3',5'-bisphosphate + H(+). Functionally, transfers the 4'-phosphopantetheine moiety from coenzyme A to a Ser of acyl-carrier-protein. The protein is Holo-[acyl-carrier-protein] synthase of Leptospira interrogans serogroup Icterohaemorrhagiae serovar copenhageni (strain Fiocruz L1-130).